The chain runs to 254 residues: Zinc import ATP-binding protein ZnuC (254 aa).

An ABC transporter domain is found at V5–P219. G37–S44 serves as a coordination point for ATP. The segment covering C233 to P242 has biased composition (basic and acidic residues). Residues C233–Q254 form a disordered region.

This sequence belongs to the ABC transporter superfamily. Zinc importer (TC 3.A.1.15.5) family. The complex is composed of two ATP-binding proteins (ZnuC), two transmembrane proteins (ZnuB) and a solute-binding protein (ZnuA).

Its subcellular location is the cell inner membrane. It carries out the reaction Zn(2+)(out) + ATP(in) + H2O(in) = Zn(2+)(in) + ADP(in) + phosphate(in) + H(+)(in). Its function is as follows. Part of the ABC transporter complex ZnuABC involved in zinc import. Responsible for energy coupling to the transport system. The sequence is that of Zinc import ATP-binding protein ZnuC from Aeromonas hydrophila subsp. hydrophila (strain ATCC 7966 / DSM 30187 / BCRC 13018 / CCUG 14551 / JCM 1027 / KCTC 2358 / NCIMB 9240 / NCTC 8049).